Consider the following 122-residue polypeptide: Protein GL2-INTERACTING REPRESSOR 1 (122 aa).

Over residues 1 to 10 the composition is skewed to basic and acidic residues; sequence MSRRSPKLEL. The disordered stretch occupies residues 1-62; the sequence is MSRRSPKLEL…PSVRYSTSPE (62 aa). The EAR signature appears at 7-12; sequence KLELKL. Residues 27–46 show a composition bias toward low complexity; that stretch reads SPSRSATTSPTSPPSSCVSS. Residues 47-62 show a composition bias toward polar residues; it reads EMNQDEPSVRYSTSPE.

Interacts with GL2. Interacts with TPL. In terms of tissue distribution, expressed in root and shoot meristems.

Its subcellular location is the nucleus. Functionally, acts as a negative regulator of root hair development redundantly with GIR2. GIR1 and GIR2 may function as adapter proteins that associate with GL2 and participate in the control of root hair formation. GIR1 and GIR2 may function as adapter proteins that associate with TPL and participate in the repression of root gene expression. This is Protein GL2-INTERACTING REPRESSOR 1 from Arabidopsis thaliana (Mouse-ear cress).